Consider the following 424-residue polypeptide: GTPase Obg (424 aa).

An Obg domain is found at 1–158 (MFVDRAEVFV…RYISLELKIL (158 aa)). Positions 21 to 42 (SFRREKYVPRGGPDGGDGGKGG) are disordered. Residues 32-42 (GPDGGDGGKGG) show a composition bias toward gly residues. An OBG-type G domain is found at 159–331 (ADVGLLGFPN…LMKEAAAMLT (173 aa)). Residues 165-172 (GFPNVGKS), 190-194 (FTTLS), 212-215 (DIPG), 282-285 (NKAD), and 312-314 (SAA) each bind GTP. S172 and T192 together coordinate Mg(2+). Residues 345-424 (KFIPEEKRFT…LNDFEFDYIL (80 aa)) form the OCT domain.

The protein belongs to the TRAFAC class OBG-HflX-like GTPase superfamily. OBG GTPase family. Monomer. The cofactor is Mg(2+).

It localises to the cytoplasm. Functionally, an essential GTPase which binds GTP, GDP and possibly (p)ppGpp with moderate affinity, with high nucleotide exchange rates and a fairly low GTP hydrolysis rate. Plays a role in control of the cell cycle, stress response, ribosome biogenesis and in those bacteria that undergo differentiation, in morphogenesis control. This chain is GTPase Obg, found in Clostridium kluyveri (strain NBRC 12016).